A 555-amino-acid polypeptide reads, in one-letter code: Formate--tetrahydrofolate ligase (555 aa).

65 to 72 (TPAGEGKS) contributes to the ATP binding site.

The protein belongs to the formate--tetrahydrofolate ligase family.

It carries out the reaction (6S)-5,6,7,8-tetrahydrofolate + formate + ATP = (6R)-10-formyltetrahydrofolate + ADP + phosphate. Its pathway is one-carbon metabolism; tetrahydrofolate interconversion. This Staphylococcus haemolyticus (strain JCSC1435) protein is Formate--tetrahydrofolate ligase.